The sequence spans 1066 residues: UPF0182 protein BL1029 (1066 aa).

The interval 12–74 (GNGGDSRRNN…KPASGGSGGS (63 aa)) is disordered. Residues 44–61 (NAGPSGSSRPPRGPANPR) show a composition bias toward low complexity. Helical transmembrane passes span 77–97 (SKILIGVVLALAIIVGLFFGL), 126–146 (LWVAYALLMALTGFVSAWLAI), 179–199 (VAVVISLIVGVIFGSQFNANW), 235–255 (VLAAVAMLLGVGLVFSVVTHV), 282–302 (LGIWLMLNMFAWAVRQMIGVF), 326–346 (VTFIMAALTAILGVVLGIWLM), and 372–392 (VTSIAVVVVVGLVLTVAWPVL). The tract at residues 977 to 1044 (DSGAAAGDAE…SQSAMKNGDW (68 aa)) is disordered. Residues 989-998 (SGDQSGSDTN) show a composition bias toward polar residues. Residues 1003 to 1016 (GTTDGKSDSGSSSD) show a composition bias toward low complexity.

The protein belongs to the UPF0182 family.

It localises to the cell membrane. In Bifidobacterium longum (strain NCC 2705), this protein is UPF0182 protein BL1029.